Here is a 113-residue protein sequence, read N- to C-terminus: Cell cycle protein GpsB (113 aa).

A coiled-coil region spans residues 36-68 (LDMVIKDYSTFTQEIEALQAENIRLVQELDNAP).

The protein belongs to the GpsB family. Forms polymers through the coiled coil domains. Interacts with PBP1, MreC and EzrA.

Its subcellular location is the cytoplasm. Its function is as follows. Divisome component that associates with the complex late in its assembly, after the Z-ring is formed, and is dependent on DivIC and PBP2B for its recruitment to the divisome. Together with EzrA, is a key component of the system that regulates PBP1 localization during cell cycle progression. Its main role could be the removal of PBP1 from the cell pole after pole maturation is completed. Also contributes to the recruitment of PBP1 to the division complex. Not essential for septum formation. This chain is Cell cycle protein GpsB, found in Listeria monocytogenes serotype 4b (strain CLIP80459).